The primary structure comprises 525 residues: GMP synthase [glutamine-hydrolyzing] (525 aa).

The Glutamine amidotransferase type-1 domain maps to 11–200; it reads PVLVVDFGAQ…LTEIAGLEQN (190 aa). Residue Cys-88 is the Nucleophile of the active site. Residues His-174 and Glu-176 contribute to the active site. One can recognise a GMPS ATP-PPase domain in the interval 201–399; that stretch reads WTAANIAEEL…LGLPEEIVNR (199 aa). Position 229–235 (229–235) interacts with ATP; it reads SGGVDSA.

In terms of assembly, homodimer.

It catalyses the reaction XMP + L-glutamine + ATP + H2O = GMP + L-glutamate + AMP + diphosphate + 2 H(+). It participates in purine metabolism; GMP biosynthesis; GMP from XMP (L-Gln route): step 1/1. Its function is as follows. Catalyzes the synthesis of GMP from XMP. The sequence is that of GMP synthase [glutamine-hydrolyzing] from Corynebacterium diphtheriae (strain ATCC 700971 / NCTC 13129 / Biotype gravis).